Reading from the N-terminus, the 425-residue chain is Tol-Pal system protein TolB (425 aa).

A signal peptide spans 1 to 25; that stretch reads MTRKHILSFALMTALGMTVTSTAFA.

Belongs to the TolB family. As to quaternary structure, the Tol-Pal system is composed of five core proteins: the inner membrane proteins TolA, TolQ and TolR, the periplasmic protein TolB and the outer membrane protein Pal. They form a network linking the inner and outer membranes and the peptidoglycan layer.

The protein resides in the periplasm. Functionally, part of the Tol-Pal system, which plays a role in outer membrane invagination during cell division and is important for maintaining outer membrane integrity. The sequence is that of Tol-Pal system protein TolB from Acinetobacter baylyi (strain ATCC 33305 / BD413 / ADP1).